The chain runs to 349 residues: Inositol 2-dehydrogenase (349 aa).

This sequence belongs to the Gfo/Idh/MocA family. Homotetramer.

It catalyses the reaction myo-inositol + NAD(+) = scyllo-inosose + NADH + H(+). Involved in the oxidation of myo-inositol (MI) to 2-keto-myo-inositol (2KMI or 2-inosose). The protein is Inositol 2-dehydrogenase of Mycolicibacterium gilvum (strain PYR-GCK) (Mycobacterium gilvum (strain PYR-GCK)).